The chain runs to 366 residues: Class I histocompatibility antigen, Gogo-C*0202 alpha chain (366 aa).

The first 24 residues, 1–24 (MRVMAPRTLILLLSGALALTETWA), serve as a signal peptide directing secretion. Residues 25–114 (GSHSMRYFYT…LRGYYNQSED (90 aa)) form an alpha-1 region. Residues 25 to 308 (GSHSMRYFYT…EPSSQPTIPI (284 aa)) lie on the Extracellular side of the membrane. Asn-110 carries N-linked (GlcNAc...) asparagine glycosylation. Residues 115 to 206 (GSHTLQSMYG…ENGKETLQRA (92 aa)) are alpha-2. Intrachain disulfides connect Cys-125–Cys-188 and Cys-227–Cys-283. The interval 207–298 (EPPKTHVTHH…GLPEPLTLRW (92 aa)) is alpha-3. The Ig-like C1-type domain maps to 209–297 (PKTHVTHHPL…EGLPEPLTLR (89 aa)). Residues 299–308 (EPSSQPTIPI) are connecting peptide. The chain crosses the membrane as a helical span at residues 309–332 (VGIVVGLAVLVVLAVLGAVVTAMM). The Cytoplasmic portion of the chain corresponds to 333-366 (CRRKSSGGKGGSCSQAACSNSAQGSDESLITCKA).

It belongs to the MHC class I family. Heterodimer of an alpha chain and a beta chain (beta-2-microglobulin).

The protein resides in the membrane. Its function is as follows. Involved in the presentation of foreign antigens to the immune system. This Gorilla gorilla gorilla (Western lowland gorilla) protein is Class I histocompatibility antigen, Gogo-C*0202 alpha chain.